The sequence spans 835 residues: Transcription intermediary factor 1-beta (835 aa).

A compositionally biased stretch (low complexity) spans 1–19; that stretch reads MAASAAAASAAAASAASGS. Positions 1 to 49 are disordered; sequence MAASAAAASAAAASAASGSPGPGEGSAGGEKRSTAPSAAASASASAAAS. A2 carries the post-translational modification N-acetylalanine. A phosphoserine mark is found at S19 and S26. K31 participates in a covalent cross-link: Glycyl lysine isopeptide (Lys-Gly) (interchain with G-Cter in SUMO2). The segment covering 35 to 49 has biased composition (low complexity); sequence APSAAASASASAAAS. Phosphoserine is present on S50. The RING-type zinc finger occupies 65–121; sequence CGVCRERLRPEREPRLLPCLHSACSACLGPAAPAAANSSGDGGAAGDGTVVDCPVCK. Residues 65 to 376 form an RBCC domain region; sequence CGVCRERLRP…LIYFQLHRAL (312 aa). K127 is covalently cross-linked (Glycyl lysine isopeptide (Lys-Gly) (interchain with G-Cter in SUMO2)). S138 is modified (phosphoserine). A B box-type 1; atypical zinc finger spans residues 148–195; sequence DANQCCTSCEDNAPATSYCVECSEPLCETCVEAHQRVKYTKDHTVRST. Zn(2+) contacts are provided by C153, C156, C177, and H181. Residue K199 forms a Glycyl lysine isopeptide (Lys-Gly) (interchain with G-Cter in SUMO2) linkage. The B box-type 2 zinc finger occupies 204-245; the sequence is ERTVYCNVHKHEPLVLFCESCDTLTCRDCQLNAHKDHQYQFL. 4 residues coordinate Zn(2+): C209, H212, C232, and H237. Residues 246–376 are leucine zipper alpha helical coiled-coil region; that stretch reads EDAVRNQRKL…LIYFQLHRAL (131 aa). An interaction with MAGEC2 region spans residues 247 to 376; sequence DAVRNQRKLL…LIYFQLHRAL (130 aa). Residues K254 and K261 each participate in a glycyl lysine isopeptide (Lys-Gly) (interchain with G-Cter in SUMO2) cross-link. At K266 the chain carries N6-acetyllysine. K272 is covalently cross-linked (Glycyl lysine isopeptide (Lys-Gly) (interchain with G-Cter in SUMO2)). At K304 the chain carries N6-acetyllysine; alternate. A Glycyl lysine isopeptide (Lys-Gly) (interchain with G-Cter in SUMO2); alternate cross-link involves residue K304. Residue K319 forms a Glycyl lysine isopeptide (Lys-Gly) (interchain with G-Cter in SUMO2) linkage. The residue at position 340 (K340) is an N6-acetyllysine. K366 is covalently cross-linked (Glycyl lysine isopeptide (Lys-Gly) (interchain with G-Cter in SUMO2)). The involved in binding PPP1CA stretch occupies residues 366-370; that stretch reads KLIYF. K377 is modified (N6-acetyllysine; alternate). K377 is covalently cross-linked (Glycyl lysine isopeptide (Lys-Gly) (interchain with G-Cter in SUMO2); alternate). K377 participates in a covalent cross-link: Glycyl lysine isopeptide (Lys-Gly) (interchain with G-Cter in SUMO1); alternate. Residue K407 forms a Glycyl lysine isopeptide (Lys-Gly) (interchain with G-Cter in SUMO2) linkage. The interval 411-480 is disordered; it reads ERPGTNSTGP…SRSGEGEVSG (70 aa). Position 417 is a phosphoserine (S417). K434 participates in a covalent cross-link: Glycyl lysine isopeptide (Lys-Gly) (interchain with G-Cter in SUMO2). Positions 434–443 are enriched in polar residues; that stretch reads KQGSGSSQPM. Residues S437, S439, and S453 each carry the phosphoserine modification. K469 participates in a covalent cross-link: Glycyl lysine isopeptide (Lys-Gly) (interchain with G-Cter in SUMO2); alternate. A Glycyl lysine isopeptide (Lys-Gly) (interchain with G-Cter in SUMO1); alternate cross-link involves residue K469. At R470 the chain carries Citrulline. At S471 the chain carries Phosphoserine. R472 is modified (citrulline). A phosphoserine mark is found at S473, S479, and S489. The segment at 476–513 is HP1 box; sequence GEVSGLMRKVPRVSLERLDLDLTADSQPPVFKVFPGST. A PxVxL motif motif is present at residues 481-494; that stretch reads LMRKVPRVSLERLD. A Phosphothreonine modification is found at T498. S501 is subject to Phosphoserine. Residue K507 forms a Glycyl lysine isopeptide (Lys-Gly) (interchain with G-Cter in SUMO2) linkage. T541 bears the Phosphothreonine mark. K554 participates in a covalent cross-link: Glycyl lysine isopeptide (Lys-Gly) (interchain with G-Cter in SUMO2); alternate. K554 participates in a covalent cross-link: Glycyl lysine isopeptide (Lys-Gly) (interchain with G-Cter in SUMO); alternate. K575 is covalently cross-linked (Glycyl lysine isopeptide (Lys-Gly) (interchain with G-Cter in SUMO2)). The interval 584–618 is disordered; it reads GPGAEGPRLASPSGSTSSGLEVVAPEGTSAPGGGP. S594 is modified (phosphoserine). The PHD-type zinc finger occupies 625-672; it reads ATICRVCQKPGDLVMCNQCEFCFHLDCHLPALQDVPGEEWSCSLCHVL. A Glycyl lysine isopeptide (Lys-Gly) (interchain with G-Cter in SUMO) cross-link involves residue K676. Phosphoserine is present on residues S683, S689, and S697. One can recognise a Bromo domain in the interval 695 to 799; it reads KLSPANQRKC…RFFETRMNEA (105 aa). K750 is covalently cross-linked (Glycyl lysine isopeptide (Lys-Gly) (interchain with G-Cter in SUMO2); alternate). K750 participates in a covalent cross-link: Glycyl lysine isopeptide (Lys-Gly) (interchain with G-Cter in SUMO1); alternate. K750 is covalently cross-linked (Glycyl lysine isopeptide (Lys-Gly) (interchain with G-Cter in SUMO); alternate). The residue at position 752 (S752) is a Phosphoserine. Y755 carries the post-translational modification Phosphotyrosine. S757 bears the Phosphoserine mark. N6-acetyllysine; alternate occurs at positions 770, 774, and 779. Residues K770, K774, and K779 each participate in a glycyl lysine isopeptide (Lys-Gly) (interchain with G-Cter in SUMO2); alternate cross-link. K779 participates in a covalent cross-link: Glycyl lysine isopeptide (Lys-Gly) (interchain with G-Cter in SUMO1); alternate. S784 bears the Phosphoserine mark. A Glycyl lysine isopeptide (Lys-Gly) (interchain with G-Cter in SUMO2); alternate cross-link involves residue K804. A Glycyl lysine isopeptide (Lys-Gly) (interchain with G-Cter in SUMO); alternate cross-link involves residue K804. The segment at 815–835 is disordered; that stretch reads MSLPGAGLSSQELSGGPGDGP. Phosphoserine; by ATM and ATR and dsDNA kinase is present on S824.

It belongs to the TRIM/RBCC family. Interacts with SETX. Oligomer; the RBCC domain homotrimerizes and interacts with one molecule of KRAB to form the KRAB-KAP1 corepressor complex. Binding to a KRAB domain is an absolute requirement for silencing gene expression. Interacts with CEBPB and NR3C1. Interacts with a number of KRAB-ZFP proteins including ZNF10, ZFP53, ZFP68, ZNF382 and ZNF256. Interacts with NCOR1, NR3C1 and CHD3. Interacts with CEBPB (via the RING-type and PHD-type zinc fingers). Component of a ternary complex that includes TRIM28, a HP1 protein (CBX1, CBX3 OR CBX5), a KRAB domain-containing protein, and DNA. Interacts with CBX5 (via the PxVxL motif); the interaction occurs in interphase nuclei and competes for binding POGZ. Interacts with POGZ; the interaction competes for interaction with CBX5. Interacts with SETDB1; the interaction is enhanced by KAP1 sumoylation, stimulates SETDB1 histone methyltransferase activity and gene silencing. Interacts (via the PHD-type zinc finger) with UBE2I; the interaction is required for sumoylation and repressor activity. Component of the TRIM28/KAP1-ERBB4-MDM2 complex involved in connecting growth factor and DNA damage responses. Interacts directly with ERBB4; the interaction represses ERBB4-mediated transcription activity. Interacts with MDM2; the interaction contributes to p53/TP53 inactivation. Component of the TRIM28/KAP1-MDM2-p53/TP53; involved in regulating p53/TP53 stabilization and activity. Interacts (via the leucine zipper alpha helical coiled-coil) with E2F1 (central region); the interaction inhibits E2F1 acetylation and transcriptional activity. Interacts with PPP1CA; the interaction dephosphorylates TRIM28 at Ser-824 and forms a complex at the p21 promoter site. Interacts with PPP1CB; the interaction is weak but is increased on dephosphorylation at Ser-824. Interacts with FES/FPS. Interacts with SMARCAD1. Interacts with, and sumoylates IRF7. Interacts with MAGEC2. Part of a complex composed of TRIM28, HDAC1, HDAC2 and EHMT2. Interacts with AICDA. Interacts (via the RBCC domain) with KOX1 (via the KRAB domain), ZNF268 (via the KRAB domain) and ZNF300 (via the KRAB domain); the interactions increase KOX1, ZNF268 and ZNF300 nuclear localization activities. The large PER complex involved in the histone methylation is composed of at least PER2, CBX3, TRIM28, SUV39H1 and/or SUV39H2; CBX3 mediates the formation of the complex. Interacts with isoform 2 of ZFP90. Forms a complex with FOXP3 in the presence of isoform 2 of ZFP90. Interacts with NR4A3; the interactions potentiates NR4A3 activity on NurRE promoter. Interacts (unphosphorylated or phosphorylated form) with ZBTB1 (via BTB domain). Probably part of a corepressor complex containing ZNF304, TRIM28, SETDB1 and DNMT1. Interacts with ATRX. Forms a complex with ATRX, SETDB1 and ZNF274. Interacts with ZFP568; the interaction mediates ZFP568 transcriptional repression activity. Interacts with RRP1B. Interacts with CRY1. Interacts with ZNF263; recruited to the SIX3 promoter along with other proteins involved in chromatin modification and transcriptional corepression where it contributes to transcriptional repression. Interacts with CYREN (via XLF motif). Interacts with TRIM17; this interaction prevents TRIM28 activity. Interacts with ZNF746. Interacts with PHF13. Interacts with ZNF354C. Interacts with ZNF432; the interaction is independent of PARP1. In terms of assembly, (Microbial infection) Interacts with herpes virus 8 protein LANA1; this interaction facilitates establishment of viral latency. In terms of processing, ATM-induced phosphorylation on Ser-824 represses sumoylation leading to the de-repression of expression of a subset of genes involved in cell cycle control and apoptosis in response to genotoxic stress. Dephosphorylation by the phosphatases, PPP1CA and PP1CB forms, allows sumoylation and expression of TRIM28 target genes. Post-translationally, sumoylation/desumoylation events regulate TRIM28-mediated transcriptional repression. Sumoylation is required for interaction with CHD3 and SETDB1 and the corepressor activity. Represses and is repressed by Ser-824 phosphorylation. Enhances the TRIM28 corepressor activity, inhibiting transcriptional activity of a number of genes including GADD45A and CDKN1A/p21. Lys-554, Lys-779 and Lys-804 are the major sites of sumoylation. In response to Dox-induced DNA damage, enhanced phosphorylation on Ser-824 prevents sumoylation and allows de-repression of CDKN1A/p21. Auto-ubiquitinated; enhanced by MAGEA2 and MAGEC2. In terms of processing, citrullinated by PADI4. Post-translationally, ADP-ribosylated by SIRT6, promoting TRIM28/KAP1 interaction with CBX5, thereby contributing to the packaging of LINE-1 retrotransposon elements into transcriptionally repressive heterochromatin. In terms of tissue distribution, expressed in all tissues tested including spleen, thymus, prostate, testis, ovary, small intestine, colon and peripheral blood leukocytes.

The protein localises to the nucleus. The catalysed reaction is S-ubiquitinyl-[E2 ubiquitin-conjugating enzyme]-L-cysteine + [acceptor protein]-L-lysine = [E2 ubiquitin-conjugating enzyme]-L-cysteine + N(6)-ubiquitinyl-[acceptor protein]-L-lysine.. It functions in the pathway protein modification; protein sumoylation. Functionally, nuclear corepressor for KRAB domain-containing zinc finger proteins (KRAB-ZFPs). Mediates gene silencing by recruiting CHD3, a subunit of the nucleosome remodeling and deacetylation (NuRD) complex, and SETDB1 (which specifically methylates histone H3 at 'Lys-9' (H3K9me)) to the promoter regions of KRAB target genes. Enhances transcriptional repression by coordinating the increase in H3K9me, the decrease in histone H3 'Lys-9 and 'Lys-14' acetylation (H3K9ac and H3K14ac, respectively) and the disposition of HP1 proteins to silence gene expression. Recruitment of SETDB1 induces heterochromatinization. May play a role as a coactivator for CEBPB and NR3C1 in the transcriptional activation of ORM1. Also a corepressor for ERBB4. Inhibits E2F1 activity by stimulating E2F1-HDAC1 complex formation and inhibiting E2F1 acetylation. May serve as a partial backup to prevent E2F1-mediated apoptosis in the absence of RB1. Important regulator of CDKN1A/p21(CIP1). Has E3 SUMO-protein ligase activity toward itself via its PHD-type zinc finger. Also specifically sumoylates IRF7, thereby inhibiting its transactivation activity. Ubiquitinates p53/TP53 leading to its proteasomal degradation; the function is enhanced by MAGEC2 and MAGEA2, and possibly MAGEA3 and MAGEA6. Mediates the nuclear localization of KOX1, ZNF268 and ZNF300 transcription factors. In association with isoform 2 of ZFP90, is required for the transcriptional repressor activity of FOXP3 and the suppressive function of regulatory T-cells (Treg). Probably forms a corepressor complex required for activated KRAS-mediated promoter hypermethylation and transcriptional silencing of tumor suppressor genes (TSGs) or other tumor-related genes in colorectal cancer (CRC) cells. Required to maintain a transcriptionally repressive state of genes in undifferentiated embryonic stem cells (ESCs). In ESCs, in collaboration with SETDB1, is also required for H3K9me3 and silencing of endogenous and introduced retroviruses in a DNA-methylation independent-pathway. Associates at promoter regions of tumor suppressor genes (TSGs) leading to their gene silencing. The SETDB1-TRIM28-ZNF274 complex may play a role in recruiting ATRX to the 3'-exons of zinc-finger coding genes with atypical chromatin signatures to establish or maintain/protect H3K9me3 at these transcriptionally active regions. (Microbial infection) Plays a critical role in the shutdown of lytic gene expression during the early stage of herpes virus 8 primary infection. This inhibition is mediated through interaction with herpes virus 8 protein LANA1. In Homo sapiens (Human), this protein is Transcription intermediary factor 1-beta.